A 148-amino-acid polypeptide reads, in one-letter code: MSEQPFWQQKTLDDMSDAEWESLCDGCGQCCLHKLMDEDTDEIYFTNVACRQLNIKTCQCRNYARRFEYEPDCIKLTRENLPTFEWLPPTCAYRLLAEGKPLPAWHPLLTGSKAAMHGERISVRHIAVPESTVVDWQDHILNLPDRAR.

The protein belongs to the UPF0260 family.

The polypeptide is UPF0260 protein KPN78578_22800 (Klebsiella pneumoniae subsp. pneumoniae (strain ATCC 700721 / MGH 78578)).